Here is a 72-residue protein sequence, read N- to C-terminus: Phycobilisome 37.5 kDa linker polypeptide, phycocyanin-associated, rod (72 aa).

A PBS-linker domain is found at 1–72; the sequence is MTSSAAAIRL…ASGNISVREF (72 aa).

Belongs to the phycobilisome linker protein family.

It is found in the cellular thylakoid membrane. In terms of biological role, rod linker protein, associated with phycocyanin. Linker polypeptides determine the state of aggregation and the location of the disk-shaped phycobiliprotein units within the phycobilisome and modulate their spectroscopic properties in order to mediate a directed and optimal energy transfer. This Pseudanabaena tenuis (strain PCC 7409) protein is Phycobilisome 37.5 kDa linker polypeptide, phycocyanin-associated, rod (cpcH2).